Here is a 156-residue protein sequence, read N- to C-terminus: 6,7-dimethyl-8-ribityllumazine synthase (156 aa).

5-amino-6-(D-ribitylamino)uracil contacts are provided by residues phenylalanine 23, 57–59 (AFE), and 81–83 (AVI). 86 to 87 (ST) provides a ligand contact to (2S)-2-hydroxy-3-oxobutyl phosphate. Histidine 89 (proton donor) is an active-site residue. A 5-amino-6-(D-ribitylamino)uracil-binding site is contributed by phenylalanine 114. Arginine 128 contributes to the (2S)-2-hydroxy-3-oxobutyl phosphate binding site.

The protein belongs to the DMRL synthase family.

It catalyses the reaction (2S)-2-hydroxy-3-oxobutyl phosphate + 5-amino-6-(D-ribitylamino)uracil = 6,7-dimethyl-8-(1-D-ribityl)lumazine + phosphate + 2 H2O + H(+). It functions in the pathway cofactor biosynthesis; riboflavin biosynthesis; riboflavin from 2-hydroxy-3-oxobutyl phosphate and 5-amino-6-(D-ribitylamino)uracil: step 1/2. Its function is as follows. Catalyzes the formation of 6,7-dimethyl-8-ribityllumazine by condensation of 5-amino-6-(D-ribitylamino)uracil with 3,4-dihydroxy-2-butanone 4-phosphate. This is the penultimate step in the biosynthesis of riboflavin. In Campylobacter lari (strain RM2100 / D67 / ATCC BAA-1060), this protein is 6,7-dimethyl-8-ribityllumazine synthase.